The chain runs to 464 residues: Fumarate hydratase class II (464 aa).

Substrate is bound by residues 98–100 (SGT), 129–132 (HPND), 139–141 (SSN), and Thr187. The active-site Proton donor/acceptor is His188. Residue Ser318 is part of the active site. Residues Ser319 and 324-326 (KVN) each bind substrate.

The protein belongs to the class-II fumarase/aspartase family. Fumarase subfamily. Homotetramer.

It localises to the cytoplasm. The enzyme catalyses (S)-malate = fumarate + H2O. It functions in the pathway carbohydrate metabolism; tricarboxylic acid cycle; (S)-malate from fumarate: step 1/1. In terms of biological role, involved in the TCA cycle. Catalyzes the stereospecific interconversion of fumarate to L-malate. This chain is Fumarate hydratase class II, found in Haemophilus influenzae (strain ATCC 51907 / DSM 11121 / KW20 / Rd).